A 93-amino-acid chain; its full sequence is YcgL domain-containing protein swp_2294 (93 aa).

The YcgL domain maps to 1-85; sequence MICAVYKSLR…PVVNLLEQHK (85 aa).

This is YcgL domain-containing protein swp_2294 from Shewanella piezotolerans (strain WP3 / JCM 13877).